Consider the following 294-residue polypeptide: Cytidine deaminase (294 aa).

CMP/dCMP-type deaminase domains lie at Asp-48 to Lys-168 and Leu-186 to Gly-294. Position 89–91 (Asn-89–Glu-91) interacts with substrate. A Zn(2+)-binding site is contributed by His-102. The active-site Proton donor is Glu-104. Residues Cys-129 and Cys-132 each contribute to the Zn(2+) site.

The protein belongs to the cytidine and deoxycytidylate deaminase family. As to quaternary structure, homodimer. It depends on Zn(2+) as a cofactor.

The enzyme catalyses cytidine + H2O + H(+) = uridine + NH4(+). It catalyses the reaction 2'-deoxycytidine + H2O + H(+) = 2'-deoxyuridine + NH4(+). This enzyme scavenges exogenous and endogenous cytidine and 2'-deoxycytidine for UMP synthesis. In Salmonella agona (strain SL483), this protein is Cytidine deaminase.